Here is a 230-residue protein sequence, read N- to C-terminus: Orotidine 5'-phosphate decarboxylase (230 aa).

Substrate-binding positions include Asp-11, Lys-34, 61 to 70 (DLKLHDIPNT), Thr-117, Arg-179, Gln-188, Gly-208, and Arg-209. Catalysis depends on Lys-63, which acts as the Proton donor.

It belongs to the OMP decarboxylase family. Type 1 subfamily. As to quaternary structure, homodimer.

The catalysed reaction is orotidine 5'-phosphate + H(+) = UMP + CO2. Its pathway is pyrimidine metabolism; UMP biosynthesis via de novo pathway; UMP from orotate: step 2/2. Its function is as follows. Catalyzes the decarboxylation of orotidine 5'-monophosphate (OMP) to uridine 5'-monophosphate (UMP). The polypeptide is Orotidine 5'-phosphate decarboxylase (Streptococcus pyogenes serotype M6 (strain ATCC BAA-946 / MGAS10394)).